The sequence spans 62 residues: Trypsin inhibitor MCI-3 (62 aa).

Belongs to the protease inhibitor I13 (potato type I serine protease inhibitor) family.

The protein is Trypsin inhibitor MCI-3 of Momordica charantia (Bitter gourd).